The chain runs to 1164 residues: MKKNTDSEMDQRLGYKFLVPDPKAGVFYRPLHFQYVSYSNFILHRLHGILTVKRPLLSFKNNTERIMIEISNVKVTPPDYSPIIASIKGKSYDALATFTVNIFKEVMAKEGISITKISSYEGKDSHLIKIPLLIGYGNKNPLDTAKYLVPNVIGGVFINKQSVEKVGINLVEKITTWPKFRVVKPNSFTFSFSSVSPPNILPTRYRHYKISLDISQLEASNISSTKTFITVNIVLLSQYLSRVSLGFIRRSLSYDMPPEVVYLVNAIIDSAKRLTESITDFNIDTYINDLVEAEHVKQKSQLTINEFKYEMLHNFLPHMNYTPDQLKGFYMISLLRKFLYCIYYTSRYPDRDSMVCHRILTYGKYFETLAHDELENYIGNIRNDIMNNHKNRGTYAVNIHVLTTPGLNHAFSSLLSGKFKKSDGSYRTHPHYSWMQNISIPRSVGFYPDQVKISKMFSVRKYHPSQYLYFCSSDVPERGPQVGLVSQLSVLSSITNILTSEYLDLEKKICEYIRSYYKDDISYFETGFPITIENALVASLNPNMICDFVTDFRRRKRMGFFGNLEVGITLVRDHMNEIRINIGAGRLVRPFLVVDNGELMMDVCPELESRLDDMTFSDIQKEFPHVIEMVDIEQFTFSNVCESVQKFRMMSKDERKQYDLCDFPAEFRDGYVASSLVGINHNSGPRAILGCAQAKQAISCLSSDIRNKIDNGIHLMYPERPIVISKALETSKIAANCFGQHVTIALMSYKGINQEDGIIIKKQFIQRGGLDIVTAKKHQVEIPLENFNNKERDRSNAYSKLESNGLVRLNAFLESGDAMARNISSRTLEDDFARDNQISFDVSEKYTDMYKSRVERVQVELTDKVKVRVLTMKERRPILGDKFTTRTSQKGTVAYIADETELPYDENGITPDVIINSTSIFSRKTISMLIEVILTAAYSAKPYNNKGENRPVCFPSSNETSIDTYMQFAKQCYEHLNPKLTEKELSDKIFCEKILYDPETDKPYASKVFFGPIYYLRLRHLTQDKATVRCRGKKTKLIRQANEGRKRGGGIKFGEMERDCLIAHGAANTITEVLKDSEEDYQDVYICENCGDIAAQIKSINTCLRCSKLNLSPLLTKIDTTHVSKVFLTQMNARGVKVKLDFERRPPSFYKPLDKVDLKPSFLK.

This sequence belongs to the RNA polymerase beta chain family. In terms of assembly, the DNA-dependent RNA polymerase used for intermediate and late genes expression consists of eight subunits 147 kDa, 133 kDa, 35 kDa, 30 kDa, 22 kDa, 19 kDa, 18 kDa and 7 kDa totalling more than 500 kDa in mass. The same holoenzyme, with the addition of the transcription-specificity factor RAP94, is used for early gene expression.

It is found in the virion. It catalyses the reaction RNA(n) + a ribonucleoside 5'-triphosphate = RNA(n+1) + diphosphate. In terms of biological role, part of the DNA-dependent RNA polymerase which catalyzes the transcription of viral DNA into RNA using the four ribonucleoside triphosphates as substrates. Responsible for the transcription of early, intermediate and late genes. DNA-dependent RNA polymerase associates with the early transcription factor (ETF), itself composed of OPG118 and OPG133, thereby allowing the early genes transcription. Late transcription, and probably also intermediate transcription, require newly synthesized RNA polymerase. This Homo sapiens (Human) protein is DNA-directed RNA polymerase 133 kDa polypeptide (OPG151).